A 317-amino-acid chain; its full sequence is L-lactate dehydrogenase (317 aa).

NAD(+) is bound by residues Val-18, Asp-39, Lys-44, Tyr-69, and 83–84; that span reads GA. Residues Gln-86, Arg-92, and 124 to 127 contribute to the substrate site; that span reads NPVD. Residues 122-124 and Ser-147 contribute to the NAD(+) site; that span reads VTN. 152 to 155 contacts substrate; the sequence is DTAR. Positions 157 and 172 each coordinate beta-D-fructose 1,6-bisphosphate. The active-site Proton acceptor is His-179. Position 225 is a phosphotyrosine (Tyr-225). Thr-234 contributes to the substrate binding site.

This sequence belongs to the LDH/MDH superfamily. LDH family. As to quaternary structure, homotetramer.

The protein localises to the cytoplasm. The catalysed reaction is (S)-lactate + NAD(+) = pyruvate + NADH + H(+). Its pathway is fermentation; pyruvate fermentation to lactate; (S)-lactate from pyruvate: step 1/1. With respect to regulation, allosterically activated by fructose 1,6-bisphosphate (FBP). In terms of biological role, catalyzes the conversion of lactate to pyruvate. The polypeptide is L-lactate dehydrogenase (Acetivibrio thermocellus (strain ATCC 27405 / DSM 1237 / JCM 9322 / NBRC 103400 / NCIMB 10682 / NRRL B-4536 / VPI 7372) (Clostridium thermocellum)).